Reading from the N-terminus, the 570-residue chain is MAKYVVGSAWPYVQTVPHLGNMIGSVLSADVYARYLRLRGHEVVFVSGSDMHGTPIEVEAIQLGVDPADYALKMHQIVAELFRRWDISFDLYTHTHSETHIKFVQEFFARVYENGFIFTRDDEVPYCPRDKIYLPDRFVIGKCPYCGYERARGDQCENCGRLLDPKQLIEPRCAVCGSKPEWRVTRHWYLDLRRLEDRIRKYVEGNPHLPLNAKEMSLAMLKEGMRPRAITRDNKWGIPAPFPGAEGKTIYVWFEAVLGYISAVVEYFKKLGREEEWKRFWLDQETKVVFFVGKDNVPFHVIILPALLMASGENYVMPTTTASTEYLLYEGDKFSKSRRWGIWIDEALHLLPTDYWRFVLVYIRPENRDTSFTWQTALEVINKVLNDDVGNYANRVLSFIKSRMGGAVPPPGKPSPEDEEFISKVAQLFQKAEAHYDAIELKEAVHTVVEIAREGNKYLNARAPWELAKKDAEAANAVLYRAFWSLKYLAAGLAPVVPRSAETLWAMMGISTPLTWEEAKKPPTPGAQLGEVKPLFRKITEQDVKVLLAKLEELRAQKYSRKYPWEQVLL.

A 'HIGH' region motif is present at residues 11–21; the sequence is PYVQTVPHLGN. The Zn(2+) site is built by Cys-143, Cys-146, Cys-156, and Cys-159. A 'KMSKS' region motif is present at residues 333 to 337; sequence KFSKS. Lys-336 is a binding site for ATP.

This sequence belongs to the class-I aminoacyl-tRNA synthetase family. MetG type 1 subfamily. It depends on Zn(2+) as a cofactor.

It localises to the cytoplasm. The enzyme catalyses tRNA(Met) + L-methionine + ATP = L-methionyl-tRNA(Met) + AMP + diphosphate. Its function is as follows. Is required not only for elongation of protein synthesis but also for the initiation of all mRNA translation through initiator tRNA(fMet) aminoacylation. The sequence is that of Methionine--tRNA ligase from Pyrobaculum arsenaticum (strain DSM 13514 / JCM 11321 / PZ6).